The chain runs to 250 residues: MTDSLIIFPAIDLKEGHVVRLSEGDMDRATIYDDDPAARARQFYEAGARYLHVVDLDGAFAGHAMNAAAVDAIVKAFPGTIELGGGIRDMNAIDGWLSRGISRVVIGTAAFENPDLVKEAAQKYPGQIVVAVDARDGMVTTKGWAEQSEISVTDMAERFADAGVVALLYTDVGRDGLKKGCNSEATLALAAATDIPVIASGGVKDIGDIELLARHTKDGIEGVICGRAIYDGSLDLKAALAIARQGGASA.

Residue Asp-12 is the Proton acceptor of the active site. The active-site Proton donor is Asp-133.

It belongs to the HisA/HisF family.

The protein resides in the cytoplasm. The enzyme catalyses 1-(5-phospho-beta-D-ribosyl)-5-[(5-phospho-beta-D-ribosylamino)methylideneamino]imidazole-4-carboxamide = 5-[(5-phospho-1-deoxy-D-ribulos-1-ylimino)methylamino]-1-(5-phospho-beta-D-ribosyl)imidazole-4-carboxamide. The protein operates within amino-acid biosynthesis; L-histidine biosynthesis; L-histidine from 5-phospho-alpha-D-ribose 1-diphosphate: step 4/9. This Zymomonas mobilis subsp. mobilis (strain ATCC 31821 / ZM4 / CP4) protein is 1-(5-phosphoribosyl)-5-[(5-phosphoribosylamino)methylideneamino] imidazole-4-carboxamide isomerase.